The following is a 103-amino-acid chain: Histone H4 (103 aa).

Residues 1–14 (MSGRGKGGKGLGKG) show a composition bias toward gly residues. The tract at residues 1-20 (MSGRGKGGKGLGKGGAKRHR) is disordered. K6 is modified (N6-acetyl-N6-methyllysine; alternate). Residues K6, K9, and K13 each carry the N6-methyllysine; alternate modification. Residue K13 is modified to N6-acetyl-N6-methyllysine; alternate. The DNA-binding element occupies 17–21 (KRHRK). Position 92 is an N6-glutaryllysine (K92).

Belongs to the histone H4 family. The nucleosome is a histone octamer containing two molecules each of H2A, H2B, H3 and H4 assembled in one H3-H4 heterotetramer and two H2A-H2B heterodimers. The octamer wraps approximately 147 bp of DNA. Glutarylation at Lys-92 (H4K91glu) destabilizes nucleosomes by promoting dissociation of the H2A-H2B dimers from nucleosomes.

The protein resides in the nucleus. Its subcellular location is the chromosome. Functionally, core component of nucleosome. Nucleosomes wrap and compact DNA into chromatin, limiting DNA accessibility to the cellular machineries which require DNA as a template. Histones thereby play a central role in transcription regulation, DNA repair, DNA replication and chromosomal stability. DNA accessibility is regulated via a complex set of post-translational modifications of histones, also called histone code, and nucleosome remodeling. The sequence is that of Histone H4 (H4.1) from Phanerodontia chrysosporium (White-rot fungus).